We begin with the raw amino-acid sequence, 52 residues long: Conotoxin Cal9.2b (52 aa).

Positions 1-6 (KKGVTL) are excised as a propeptide. 3 cysteine pairs are disulfide-bonded: cysteine 14–cysteine 31, cysteine 19–cysteine 41, and cysteine 21–cysteine 46.

In terms of tissue distribution, expressed by the venom duct.

The protein localises to the secreted. Its function is as follows. Probable neurotoxin with unknown target. Possibly targets ion channels. This chain is Conotoxin Cal9.2b, found in Californiconus californicus (California cone).